The primary structure comprises 209 residues: Prolactin (209 aa).

Positions 1–24 (MAQRFKGSNLFLTALLCLASQGHA) are cleaved as a signal peptide. 2 cysteine pairs are disulfide-bonded: Cys70–Cys184 and Cys201–Cys209.

Belongs to the somatotropin/prolactin family.

The protein localises to the secreted. This chain is Prolactin (prl), found in Anguilla japonica (Japanese eel).